The primary structure comprises 153 residues: Endoribonuclease YbeY (153 aa).

Positions 116, 120, and 126 each coordinate Zn(2+).

It belongs to the endoribonuclease YbeY family. The cofactor is Zn(2+).

The protein resides in the cytoplasm. In terms of biological role, single strand-specific metallo-endoribonuclease involved in late-stage 70S ribosome quality control and in maturation of the 3' terminus of the 16S rRNA. The protein is Endoribonuclease YbeY of Clavibacter sepedonicus (Clavibacter michiganensis subsp. sepedonicus).